We begin with the raw amino-acid sequence, 369 residues long: 3-dehydroquinate synthase (369 aa).

Residues serine 72 to lysine 77, threonine 130 to threonine 131, lysine 142, and lysine 151 each bind NAD(+). Residues glutamate 184, histidine 247, and histidine 264 each coordinate Zn(2+).

Belongs to the sugar phosphate cyclases superfamily. Dehydroquinate synthase family. It depends on Co(2+) as a cofactor. The cofactor is Zn(2+). Requires NAD(+) as cofactor.

The protein resides in the cytoplasm. The catalysed reaction is 7-phospho-2-dehydro-3-deoxy-D-arabino-heptonate = 3-dehydroquinate + phosphate. It functions in the pathway metabolic intermediate biosynthesis; chorismate biosynthesis; chorismate from D-erythrose 4-phosphate and phosphoenolpyruvate: step 2/7. In terms of biological role, catalyzes the conversion of 3-deoxy-D-arabino-heptulosonate 7-phosphate (DAHP) to dehydroquinate (DHQ). This Bacillus cytotoxicus (strain DSM 22905 / CIP 110041 / 391-98 / NVH 391-98) protein is 3-dehydroquinate synthase.